A 197-amino-acid polypeptide reads, in one-letter code: Mediator of RNA polymerase II transcription subunit 21 (197 aa).

Residues 37-112 are disordered; the sequence is PPPSVPSAVP…APPRPDSPNT (76 aa). Composition is skewed to low complexity over residues 60-70 and 90-100; these read PTSGTATNTPG and PQMQQQHQEQP. Residues 140–183 adopt a coiled-coil conformation; that stretch reads GIKSSEAEQQERIKQLAEELRVVEEERSARRRELRRLGEKVDGL.

Belongs to the Mediator complex subunit 21 family. As to quaternary structure, component of the Mediator complex.

The protein localises to the nucleus. Functionally, component of the Mediator complex, a coactivator involved in the regulated transcription of nearly all RNA polymerase II-dependent genes. Mediator functions as a bridge to convey information from gene-specific regulatory proteins to the basal RNA polymerase II transcription machinery. Mediator is recruited to promoters by direct interactions with regulatory proteins and serves as a scaffold for the assembly of a functional preinitiation complex with RNA polymerase II and the general transcription factors. This is Mediator of RNA polymerase II transcription subunit 21 (SRB7) from Coccidioides immitis (strain RS) (Valley fever fungus).